The chain runs to 217 residues: 3,4-dihydroxy-2-butanone 4-phosphate synthase (217 aa).

D-ribulose 5-phosphate-binding positions include 37–38 (RE), aspartate 42, 150–154 (RRGHT), and glutamate 174. Glutamate 38 is a binding site for Mg(2+). Position 153 (histidine 153) interacts with Mg(2+).

This sequence belongs to the DHBP synthase family. Homodimer. Mg(2+) serves as cofactor. Mn(2+) is required as a cofactor.

It carries out the reaction D-ribulose 5-phosphate = (2S)-2-hydroxy-3-oxobutyl phosphate + formate + H(+). It functions in the pathway cofactor biosynthesis; riboflavin biosynthesis; 2-hydroxy-3-oxobutyl phosphate from D-ribulose 5-phosphate: step 1/1. Catalyzes the conversion of D-ribulose 5-phosphate to formate and 3,4-dihydroxy-2-butanone 4-phosphate. The chain is 3,4-dihydroxy-2-butanone 4-phosphate synthase from Pseudoalteromonas translucida (strain TAC 125).